Reading from the N-terminus, the 259-residue chain is Glucosamine-6-phosphate deaminase (259 aa).

The active-site Proton acceptor; for enolization step is Asp-66. Asp-135 (for ring-opening step) is an active-site residue. Residue His-137 is the Proton acceptor; for ring-opening step of the active site. The For ring-opening step role is filled by Glu-142.

This sequence belongs to the glucosamine/galactosamine-6-phosphate isomerase family. NagB subfamily.

It catalyses the reaction alpha-D-glucosamine 6-phosphate + H2O = beta-D-fructose 6-phosphate + NH4(+). Its pathway is amino-sugar metabolism; N-acetylneuraminate degradation; D-fructose 6-phosphate from N-acetylneuraminate: step 5/5. In terms of biological role, catalyzes the reversible isomerization-deamination of glucosamine 6-phosphate (GlcN6P) to form fructose 6-phosphate (Fru6P) and ammonium ion. The polypeptide is Glucosamine-6-phosphate deaminase (Rhodococcus opacus (strain B4)).